Reading from the N-terminus, the 243-residue chain is Myrosinase MB2 (243 aa).

Residue asparagine 30 is glycosylated (N-linked (GlcNAc...) asparagine). Tyrosine 51 lines the substrate pocket. Glutamate 125 functions as the Nucleophile in the catalytic mechanism. Residues tryptophan 173 and 180–181 each bind substrate; that span reads EF. N-linked (GlcNAc...) asparagine glycosylation occurs at asparagine 216.

This sequence belongs to the glycosyl hydrolase 1 family. As to quaternary structure, homodimer. As to expression, in vacuoles called myrosin grains of a certain class of cells, myrosin cells, distributed in the cotyledons and the axis of the embryo as well as in different organs of the growing plant.

The protein localises to the vacuole. The catalysed reaction is a thioglucoside + H2O = a sugar + a thiol.. Its function is as follows. Degradation of glucosinolates (glucose residue linked by a thioglucoside bound to an amino acid derivative) to glucose, sulfate and any of the products: thiocyanates, isothiocyanates, nitriles, epithionitriles or oxazolidine-2-thiones. The polypeptide is Myrosinase MB2 (Sinapis alba (White mustard)).